Reading from the N-terminus, the 485-residue chain is Glutamyl-tRNA(Gln) amidotransferase subunit A (485 aa).

Active-site charge relay system residues include Lys-78 and Ser-153. Ser-177 acts as the Acyl-ester intermediate in catalysis.

Belongs to the amidase family. GatA subfamily. In terms of assembly, heterotrimer of A, B and C subunits.

The enzyme catalyses L-glutamyl-tRNA(Gln) + L-glutamine + ATP + H2O = L-glutaminyl-tRNA(Gln) + L-glutamate + ADP + phosphate + H(+). Allows the formation of correctly charged Gln-tRNA(Gln) through the transamidation of misacylated Glu-tRNA(Gln) in organisms which lack glutaminyl-tRNA synthetase. The reaction takes place in the presence of glutamine and ATP through an activated gamma-phospho-Glu-tRNA(Gln). The sequence is that of Glutamyl-tRNA(Gln) amidotransferase subunit A from Desulfotalea psychrophila (strain LSv54 / DSM 12343).